The chain runs to 393 residues: S-adenosylmethionine synthase (393 aa).

His-17 lines the ATP pocket. Asp-19 contacts Mg(2+). A K(+)-binding site is contributed by Glu-45. Glu-58 and Gln-106 together coordinate L-methionine. Residues 106–116 are flexible loop; it reads QSAHIAQGVDA. Residues 171–173, 237–238, Asp-246, 252–253, Ala-269, and Lys-273 contribute to the ATP site; these read DAK, KF, and RK. Asp-246 contacts L-methionine. Lys-277 is a binding site for L-methionine.

This sequence belongs to the AdoMet synthase family. In terms of assembly, homotetramer; dimer of dimers. Mg(2+) is required as a cofactor. It depends on K(+) as a cofactor.

It localises to the cytoplasm. The enzyme catalyses L-methionine + ATP + H2O = S-adenosyl-L-methionine + phosphate + diphosphate. It functions in the pathway amino-acid biosynthesis; S-adenosyl-L-methionine biosynthesis; S-adenosyl-L-methionine from L-methionine: step 1/1. In terms of biological role, catalyzes the formation of S-adenosylmethionine (AdoMet) from methionine and ATP. The overall synthetic reaction is composed of two sequential steps, AdoMet formation and the subsequent tripolyphosphate hydrolysis which occurs prior to release of AdoMet from the enzyme. The chain is S-adenosylmethionine synthase from Ruegeria sp. (strain TM1040) (Silicibacter sp.).